Here is a 250-residue protein sequence, read N- to C-terminus: Probable transcriptional regulatory protein DIP1378 (250 aa).

The interval 1 to 22 (MSGHSKWATTKHKKAANDAKRG) is disordered.

Belongs to the TACO1 family.

The protein resides in the cytoplasm. The protein is Probable transcriptional regulatory protein DIP1378 of Corynebacterium diphtheriae (strain ATCC 700971 / NCTC 13129 / Biotype gravis).